Here is a 307-residue protein sequence, read N- to C-terminus: Ribonuclease Z (307 aa).

7 residues coordinate Zn(2+): His-63, His-65, Asp-67, His-68, His-141, Asp-212, and His-270. Asp-67 acts as the Proton acceptor in catalysis.

Belongs to the RNase Z family. As to quaternary structure, homodimer. It depends on Zn(2+) as a cofactor.

The enzyme catalyses Endonucleolytic cleavage of RNA, removing extra 3' nucleotides from tRNA precursor, generating 3' termini of tRNAs. A 3'-hydroxy group is left at the tRNA terminus and a 5'-phosphoryl group is left at the trailer molecule.. Functionally, zinc phosphodiesterase, which displays some tRNA 3'-processing endonuclease activity. Probably involved in tRNA maturation, by removing a 3'-trailer from precursor tRNA. The polypeptide is Ribonuclease Z (Bacillus cereus (strain B4264)).